We begin with the raw amino-acid sequence, 122 residues long: uncharacterized protein (122 aa).

Residues 1–20 form the signal peptide; it reads MGFHFCIWIIFLLPPPCKKC.

It localises to the secreted. This is an uncharacterized protein from Homo sapiens (Human).